The following is a 642-amino-acid chain: Assimilatory sulfite reductase (ferredoxin), chloroplastic (642 aa).

The N-terminal 61 residues, 1–61 (MSSTFRAPAG…SSSSSSPIQA (61 aa)), are a transit peptide targeting the chloroplast. The interval 46-74 (PVPPSASSSSSSPIQAVSTPAKPETATKR) is disordered. Residues Cys503, Cys509, Cys549, and Cys553 each contribute to the [4Fe-4S] cluster site. A siroheme-binding site is contributed by Cys553.

It belongs to the nitrite and sulfite reductase 4Fe-4S domain family. In terms of assembly, monomer. Interacts with ferredoxin. Siroheme is required as a cofactor. Requires [4Fe-4S] cluster as cofactor. Phosphorylated; this phosphorylation reduces DNA-binding. As to expression, present in leaves and roots.

The protein localises to the plastid. It is found in the chloroplast stroma. It localises to the chloroplast nucleoid. The protein resides in the plastid stroma. The catalysed reaction is hydrogen sulfide + 6 oxidized [2Fe-2S]-[ferredoxin] + 3 H2O = sulfite + 6 reduced [2Fe-2S]-[ferredoxin] + 7 H(+). Its function is as follows. Essential protein with sulfite reductase activity required in assimilatory sulfate reduction pathway during both primary and secondary metabolism and thus involved in development and growth. In terms of biological role, DNA-binding protein that binds to both double-stranded and single-stranded DNA without significant sequence specificity to reversibly repress the transcriptional activity of chloroplast nucleoids by promoting DNA compaction and possibly regulate DNA replication. The protein is Assimilatory sulfite reductase (ferredoxin), chloroplastic (SIR) of Arabidopsis thaliana (Mouse-ear cress).